Reading from the N-terminus, the 122-residue chain is Large ribosomal subunit protein uL14 (122 aa).

The protein belongs to the universal ribosomal protein uL14 family. Part of the 50S ribosomal subunit. Forms a cluster with proteins L3 and L19. In the 70S ribosome, L14 and L19 interact and together make contacts with the 16S rRNA in bridges B5 and B8.

Binds to 23S rRNA. Forms part of two intersubunit bridges in the 70S ribosome. This Syntrophobacter fumaroxidans (strain DSM 10017 / MPOB) protein is Large ribosomal subunit protein uL14.